The following is a 154-amino-acid chain: uncharacterized protein (154 aa).

The protein localises to the mitochondrion. This is an uncharacterized protein from Marchantia polymorpha (Common liverwort).